The following is a 256-amino-acid chain: uncharacterized protein (256 aa).

The next 2 helical transmembrane spans lie at Cys181 to Val201 and Gly231 to Ala251.

The protein localises to the cell membrane. This is an uncharacterized protein from Methanocaldococcus jannaschii (strain ATCC 43067 / DSM 2661 / JAL-1 / JCM 10045 / NBRC 100440) (Methanococcus jannaschii).